The sequence spans 190 residues: Ribonuclease HII (190 aa).

Positions 3–190 (KLIAGVDEVG…KPVKALLEEK (188 aa)) constitute an RNase H type-2 domain. A divalent metal cation is bound by residues aspartate 9, glutamate 10, and aspartate 101.

It belongs to the RNase HII family. It depends on Mn(2+) as a cofactor. Mg(2+) serves as cofactor.

The protein localises to the cytoplasm. The catalysed reaction is Endonucleolytic cleavage to 5'-phosphomonoester.. In terms of biological role, endonuclease that specifically degrades the RNA of RNA-DNA hybrids. This is Ribonuclease HII from Alteromonas mediterranea (strain DSM 17117 / CIP 110805 / LMG 28347 / Deep ecotype).